The primary structure comprises 363 residues: 3-isopropylmalate dehydrogenase (363 aa).

79–92 (GPKWEHLPPNDQPE) is a binding site for NAD(+). Residues arginine 100, arginine 110, arginine 139, and aspartate 228 each coordinate substrate. Mg(2+) is bound by residues aspartate 228, aspartate 252, and aspartate 256. An NAD(+)-binding site is contributed by 286–298 (GSAPDIAGKNIAN).

The protein belongs to the isocitrate and isopropylmalate dehydrogenases family. LeuB type 1 subfamily. Homodimer. Mg(2+) is required as a cofactor. It depends on Mn(2+) as a cofactor.

Its subcellular location is the cytoplasm. It catalyses the reaction (2R,3S)-3-isopropylmalate + NAD(+) = 4-methyl-2-oxopentanoate + CO2 + NADH. It functions in the pathway amino-acid biosynthesis; L-leucine biosynthesis; L-leucine from 3-methyl-2-oxobutanoate: step 3/4. In terms of biological role, catalyzes the oxidation of 3-carboxy-2-hydroxy-4-methylpentanoate (3-isopropylmalate) to 3-carboxy-4-methyl-2-oxopentanoate. The product decarboxylates to 4-methyl-2 oxopentanoate. The polypeptide is 3-isopropylmalate dehydrogenase (Vibrio vulnificus (strain YJ016)).